We begin with the raw amino-acid sequence, 312 residues long: Ribosomal RNA small subunit methyltransferase H (312 aa).

S-adenosyl-L-methionine is bound by residues 33-35 (GGH), D53, F80, D101, and Q108.

The protein belongs to the methyltransferase superfamily. RsmH family.

The protein resides in the cytoplasm. It catalyses the reaction cytidine(1402) in 16S rRNA + S-adenosyl-L-methionine = N(4)-methylcytidine(1402) in 16S rRNA + S-adenosyl-L-homocysteine + H(+). Its function is as follows. Specifically methylates the N4 position of cytidine in position 1402 (C1402) of 16S rRNA. The polypeptide is Ribosomal RNA small subunit methyltransferase H (Desulfosudis oleivorans (strain DSM 6200 / JCM 39069 / Hxd3) (Desulfococcus oleovorans)).